We begin with the raw amino-acid sequence, 302 residues long: Dermonecrotic toxin LiSicTox-alphaIA2bii (302 aa).

Positions 1 to 14 (IALILVCWSVLSQA) are cleaved as a signal peptide. Residues 15-22 (AQTDVEGR) constitute a propeptide that is removed on maturation. His-34 is a catalytic residue. Positions 54 and 56 each coordinate Mg(2+). His-70 serves as the catalytic Nucleophile. 2 cysteine pairs are disulfide-bonded: Cys-74–Cys-80 and Cys-76–Cys-219. Asp-114 contributes to the Mg(2+) binding site. Asn-279 carries an N-linked (GlcNAc...) asparagine glycan.

This sequence belongs to the arthropod phospholipase D family. Class II subfamily. It depends on Mg(2+) as a cofactor. As to expression, expressed by the venom gland.

The protein resides in the secreted. It carries out the reaction an N-(acyl)-sphingosylphosphocholine = an N-(acyl)-sphingosyl-1,3-cyclic phosphate + choline. The enzyme catalyses an N-(acyl)-sphingosylphosphoethanolamine = an N-(acyl)-sphingosyl-1,3-cyclic phosphate + ethanolamine. It catalyses the reaction a 1-acyl-sn-glycero-3-phosphocholine = a 1-acyl-sn-glycero-2,3-cyclic phosphate + choline. The catalysed reaction is a 1-acyl-sn-glycero-3-phosphoethanolamine = a 1-acyl-sn-glycero-2,3-cyclic phosphate + ethanolamine. Its function is as follows. Dermonecrotic toxins cleave the phosphodiester linkage between the phosphate and headgroup of certain phospholipids (sphingolipid and lysolipid substrates), forming an alcohol (often choline) and a cyclic phosphate. This toxin acts on sphingomyelin (SM). It may also act on ceramide phosphoethanolamine (CPE), lysophosphatidylcholine (LPC) and lysophosphatidylethanolamine (LPE), but not on lysophosphatidylserine (LPS), and lysophosphatidylglycerol (LPG). It acts by transphosphatidylation, releasing exclusively cyclic phosphate products as second products. Induces dermonecrosis, hemolysis, increased vascular permeability, edema, inflammatory response, and platelet aggregation. The polypeptide is Dermonecrotic toxin LiSicTox-alphaIA2bii (Loxosceles intermedia (Brown spider)).